Reading from the N-terminus, the 429-residue chain is C4-dicarboxylate transport protein (429 aa).

Helical transmembrane passes span 3 to 23, 44 to 64, 76 to 96, 144 to 164, 184 to 204, 222 to 242, 331 to 351, and 352 to 372; these read VSIF…GVLL, LIKM…IAGM, IALL…LVVV, AFAS…GFAL, VIFG…FGAM, LILC…GTIA, TLLV…GSGF, and IVLA…LALI.

It belongs to the dicarboxylate/amino acid:cation symporter (DAACS) (TC 2.A.23) family.

The protein resides in the cell inner membrane. Functionally, responsible for the transport of dicarboxylates such as succinate, fumarate, and malate from the periplasm across the membrane. This is C4-dicarboxylate transport protein from Yersinia pseudotuberculosis serotype O:1b (strain IP 31758).